A 430-amino-acid chain; its full sequence is Long-chain specific acyl-CoA dehydrogenase, mitochondrial (430 aa).

The N-terminal 30 residues, 1 to 30 (MAARLLRGSLRFLGGHCAARPLPALRCSHS), are a transit peptide targeting the mitochondrion. Lysine 42 bears the N6-acetyllysine mark. Phosphoserine is present on residues serine 54 and serine 55. Residues lysine 66 and lysine 81 each carry the N6-acetyllysine; alternate modification. Lysine 66 and lysine 81 each carry N6-succinyllysine; alternate. Lysine 92 and lysine 95 each carry N6-acetyllysine. Lysine 165 carries the post-translational modification N6-succinyllysine. FAD is bound by residues 170 to 179 (IAMTELGAGS) and 203 to 205 (FIS). Serine 179 is a binding site for substrate. A substrate-binding site is contributed by 227 to 228 (AR). Lysine 240 carries the N6-succinyllysine modification. Lysine 254 and lysine 279 each carry N6-acetyllysine; alternate. Lysine 254 and lysine 279 each carry N6-succinyllysine; alternate. Substrate contacts are provided by residues tyrosine 282 and 289 to 292 (PQER). Glutamate 291 (proton acceptor) is an active-site residue. Arginine 317 serves as a coordination point for FAD. An N6-acetyllysine modification is found at lysine 318. At lysine 322 the chain carries N6-acetyllysine; alternate. Lysine 322 carries the post-translational modification N6-succinyllysine; alternate. Glutamine 328 serves as a coordination point for FAD. N6-acetyllysine is present on lysine 358. Residue serine 362 is modified to Phosphoserine. 385-389 (QLHGG) provides a ligand contact to FAD. 412-413 (GG) provides a ligand contact to substrate. 414-416 (TNE) contributes to the FAD binding site.

Belongs to the acyl-CoA dehydrogenase family. Homotetramer. FAD serves as cofactor. In terms of processing, acetylation at Lys-318 and Lys-322 in proximity of the cofactor-binding sites strongly reduces catalytic activity. These sites are deacetylated by SIRT3.

The protein resides in the mitochondrion matrix. It catalyses the reaction a long-chain 2,3-saturated fatty acyl-CoA + oxidized [electron-transfer flavoprotein] + H(+) = a long-chain (2E)-enoyl-CoA + reduced [electron-transfer flavoprotein]. The catalysed reaction is hexanoyl-CoA + oxidized [electron-transfer flavoprotein] + H(+) = (2E)-hexenoyl-CoA + reduced [electron-transfer flavoprotein]. It carries out the reaction octanoyl-CoA + oxidized [electron-transfer flavoprotein] + H(+) = (2E)-octenoyl-CoA + reduced [electron-transfer flavoprotein]. The enzyme catalyses decanoyl-CoA + oxidized [electron-transfer flavoprotein] + H(+) = (2E)-decenoyl-CoA + reduced [electron-transfer flavoprotein]. It catalyses the reaction dodecanoyl-CoA + oxidized [electron-transfer flavoprotein] + H(+) = (2E)-dodecenoyl-CoA + reduced [electron-transfer flavoprotein]. The catalysed reaction is tetradecanoyl-CoA + oxidized [electron-transfer flavoprotein] + H(+) = (2E)-tetradecenoyl-CoA + reduced [electron-transfer flavoprotein]. It carries out the reaction oxidized [electron-transfer flavoprotein] + hexadecanoyl-CoA + H(+) = (2E)-hexadecenoyl-CoA + reduced [electron-transfer flavoprotein]. The enzyme catalyses octadecanoyl-CoA + oxidized [electron-transfer flavoprotein] + H(+) = (2E)-octadecenoyl-CoA + reduced [electron-transfer flavoprotein]. It catalyses the reaction eicosanoyl-CoA + oxidized [electron-transfer flavoprotein] + H(+) = (2E)-eicosenoyl-CoA + reduced [electron-transfer flavoprotein]. The catalysed reaction is docosanoyl-CoA + oxidized [electron-transfer flavoprotein] + H(+) = (2E)-docosenoyl-CoA + reduced [electron-transfer flavoprotein]. It carries out the reaction tetracosanoyl-CoA + oxidized [electron-transfer flavoprotein] + H(+) = (2E)-tetracosenoyl-CoA + reduced [electron-transfer flavoprotein]. The enzyme catalyses (5E)-tetradecenoyl-CoA + oxidized [electron-transfer flavoprotein] + H(+) = (2E,5E)-tetradecadienoyl-CoA + reduced [electron-transfer flavoprotein]. It catalyses the reaction (5Z)-tetradecenoyl-CoA + oxidized [electron-transfer flavoprotein] + H(+) = (2E,5Z)-tetradecadienoyl-CoA + reduced [electron-transfer flavoprotein]. The catalysed reaction is oxidized [electron-transfer flavoprotein] + (9Z)-octadecenoyl-CoA + H(+) = (2E,9Z)-octadecadienoyl-CoA + reduced [electron-transfer flavoprotein]. It functions in the pathway lipid metabolism; mitochondrial fatty acid beta-oxidation. Its function is as follows. Long-chain specific acyl-CoA dehydrogenase is one of the acyl-CoA dehydrogenases that catalyze the first step of mitochondrial fatty acid beta-oxidation, an aerobic process breaking down fatty acids into acetyl-CoA and allowing the production of energy from fats. The first step of fatty acid beta-oxidation consists in the removal of one hydrogen from C-2 and C-3 of the straight-chain fatty acyl-CoA thioester, resulting in the formation of trans-2-enoyl-CoA. Among the different mitochondrial acyl-CoA dehydrogenases, long-chain specific acyl-CoA dehydrogenase can act on saturated and unsaturated acyl-CoAs with 6 to 24 carbons with a preference for 8 to 18 carbons long primary chains. In Macaca fascicularis (Crab-eating macaque), this protein is Long-chain specific acyl-CoA dehydrogenase, mitochondrial.